A 347-amino-acid polypeptide reads, in one-letter code: Probable arabinogalactan endo-beta-1,4-galactanase A (347 aa).

The N-terminal stretch at 1–16 (MLFSYLLATLPLLANA) is a signal peptide. The active-site Proton donor is the Glu-150. Glu-260 serves as the catalytic Nucleophile.

It belongs to the glycosyl hydrolase 53 family.

The protein resides in the secreted. It catalyses the reaction The enzyme specifically hydrolyzes (1-&gt;4)-beta-D-galactosidic linkages in type I arabinogalactans.. Endogalactanase involved in the degradation of plant cell wall polysaccharides, and more particularly of hairy regions of pectin. The sequence is that of Probable arabinogalactan endo-beta-1,4-galactanase A (galA) from Aspergillus flavus (strain ATCC 200026 / FGSC A1120 / IAM 13836 / NRRL 3357 / JCM 12722 / SRRC 167).